The sequence spans 713 residues: Topoisomerase subunit TopoM (713 aa).

Residues 41–504 (IPSAYDGLKP…DATPVSRGDE (464 aa)) enclose the Topo IIA-type catalytic domain. The O-(5'-phospho-DNA)-tyrosine intermediate role is filled by Tyr128. The disordered stretch occupies residues 694–713 (NRAKASIKGSGADVTPAPAE).

This sequence belongs to the type II topoisomerase GyrA/ParC subunit family. In terms of assembly, a complex of TopoN and TopoM, possibly a heterotetramer. It depends on Mg(2+) as a cofactor.

It carries out the reaction ATP-dependent breakage, passage and rejoining of double-stranded DNA.. With respect to regulation, inhibited by quinolone antibiotic ciprofloxacin and coumarin antibiotic novobiocin, but at much higher concentrations than is usual for DNA gyrase/topoisomerase. Functionally, catalyzes the relaxation of negatively supercoiled DNA in the presence of ATP or dATP but not other nucleotides. Individual subunits have no activity. Not able to negatively supercoil DNA, it can however introduce positive supercoils in DNA. Relaxes positive supercoils in an ATP-dependent manner. Catenates and decatenates DNA. Generates dsDNA breaks in the presence of the quinolone antibiotic ciprofloxacin, showing it is a topoisomerase. The sequence is that of Topoisomerase subunit TopoM from Mycolicibacterium smegmatis (strain ATCC 700084 / mc(2)155) (Mycobacterium smegmatis).